Consider the following 61-residue polypeptide: Beta-toxin Tce4 (61 aa).

Residues 1–61 (KEGYLMDHEG…KVWEYATNRC (61 aa)) form the LCN-type CS-alpha/beta domain. Intrachain disulfides connect Cys-11-Cys-61, Cys-15-Cys-37, Cys-23-Cys-42, and Cys-27-Cys-44. A Cysteine amide modification is found at Cys-61.

Belongs to the long (4 C-C) scorpion toxin superfamily. Sodium channel inhibitor family. Beta subfamily. Expressed by the venom gland.

Its subcellular location is the secreted. In terms of biological role, beta toxins bind voltage-independently at site-4 of sodium channels (Nav) and shift the voltage of activation toward more negative potentials thereby affecting sodium channel activation and promoting spontaneous and repetitive firing. This is Beta-toxin Tce4 from Tityus cerroazul (Scorpion).